We begin with the raw amino-acid sequence, 306 residues long: uncharacterized protein (306 aa).

The protein belongs to the asfivirus CP312R family.

It is found in the virion. This is an uncharacterized protein from African swine fever virus (isolate Pig/Kenya/KEN-50/1950) (ASFV).